The primary structure comprises 161 residues: Nucleotide-binding protein Geob_0921 (161 aa).

The protein belongs to the YajQ family.

Functionally, nucleotide-binding protein. The protein is Nucleotide-binding protein Geob_0921 of Geotalea daltonii (strain DSM 22248 / JCM 15807 / FRC-32) (Geobacter daltonii).